Reading from the N-terminus, the 1123-residue chain is Telomerase reverse transcriptase (1123 aa).

The segment at 1 to 230 (MPRAPRCRAV…ARRRRGSPGS (230 aa)) is RNA-interacting domain 1. A GQ motif region spans residues 58–197 (VPWGARPPPA…APGLPGLPGL (140 aa)). Positions 137-141 (WGLLL) are required for regulating specificity for telomeric DNA and for processivity for primer elongation. A disordered region spans residues 202-311 (AGAGASADLR…GVPHDPAHPE (110 aa)). The Bipartite nuclear localization signal motif lies at 222 to 240 (RRRRGSPGSGVPLAKRPRR). Ser227 bears the Phosphoserine; by PKB/AKT1 mark. The interval 231–308 (GVPLAKRPRR…GPQGVPHDPA (78 aa)) is linker. The span at 260-279 (PPVSEAPAVTPAVAASPAAS) shows a compositional bias: low complexity. Residues 309 to 539 (HPETKRFLYC…LARFLVLVDG (231 aa)) are RNA-interacting domain 2. Residues 312-317 (TKRFLY) carry the TFLY; involved in RNA binding motif. The QFP motif stretch occupies residues 360–510 (ARRMRRLPAR…MKVRDCTWLH (151 aa)). The tract at residues 381-401 (LGNHARCPYRALLRTHCPLRA) is CP motif. Position 446 is a phosphoserine; by DYRK2 (Ser446). The 332-residue stretch at 595 to 926 (EVRRHREARP…CLFPWCGLLL (332 aa)) folds into the Reverse transcriptase domain. Tyr697 carries the phosphotyrosine; by SRC-type Tyr-kinases modification. Positions 702, 859, and 860 each coordinate Mg(2+). Residues 905 to 919 (LGSAAPLQLPAHCLF) are required for oligomerization. Positions 921–925 (WCGLL) are primer grip sequence. Residues 927-1123 (DTRTLEVSCD…LTADFKTILD (197 aa)) are CTE.

It belongs to the reverse transcriptase family. Telomerase subfamily. As to quaternary structure, catalytic component of the telomerase holoenzyme complex composed of one molecule of TERT, one molecule of WRAP53/TCAB1, two molecules of H/ACA ribonucleoprotein complex subunits DKC1, NOP10, NHP2 and GAR1, and a telomerase RNA template component (TERC). The telomerase holoenzyme complex is associated with TEP1, SMG6/EST1A and POT1. The molecular chaperone HSP90/P23 complex is required for correct assembly and stabilization of the active telomerase. Interacts directly with HSP90A and PTGES3. Interacts with HSPA1A; the interaction occurs in the absence of TERC and dissociates once the complex has formed. Interacts with RAN; the interaction promotes nuclear export of TERT. Interacts with XPO1. Interacts with PTPN11; the interaction retains TERT in the nucleus. Interacts with NCL (via RRM1 and C-terminal RRM4/Arg/Gly-rich domains); the interaction is important for nucleolar localization of TERT. Interacts with SMARCA4 (via the bromodomain); the interaction regulates Wnt-mediated signaling. Interacts with MCRS1 (isoform MCRS2); the interaction inhibits in vitro telomerase activity. Interacts with PIF1; the interaction has no effect on the elongation activity of TERT. Interacts with PML; the interaction recruits TERT to PML bodies and inhibits telomerase activity. Interacts with GNL3L. Interacts with isoform 1 and isoform 2 of NVL. Interacts with DHX36. Interacts with ATF7. In terms of processing, phosphorylation at Tyr-697 under oxidative stress leads to translocation of TERT to the cytoplasm and reduces its antiapoptotic activity. Dephosphorylated by SHP2/PTPN11 leading to nuclear retention. Phosphorylation at Ser-227 by the AKT pathway promotes nuclear location. Phosphorylation at the G2/M phase at Ser-446 by DYRK2 promotes ubiquitination by the EDVP complex and degradation. Ubiquitinated by the EDVP complex, a E3 ligase complex following phosphorylation at Ser-446 by DYRK2. Ubiquitinated leads to proteasomal degradation.

It localises to the nucleus. The protein localises to the nucleolus. Its subcellular location is the nucleoplasm. It is found in the chromosome. The protein resides in the telomere. It localises to the cytoplasm. The protein localises to the PML body. The catalysed reaction is DNA(n) + a 2'-deoxyribonucleoside 5'-triphosphate = DNA(n+1) + diphosphate. Its function is as follows. Telomerase is a ribonucleoprotein enzyme essential for the replication of chromosome termini in most eukaryotes. Active in progenitor and cancer cells. Inactive, or very low activity, in normal somatic cells. Catalytic component of the teleromerase holoenzyme complex whose main activity is the elongation of telomeres by acting as a reverse transcriptase that adds simple sequence repeats to chromosome ends by copying a template sequence within the RNA component of the enzyme. Catalyzes the RNA-dependent extension of 3'-chromosomal termini with the 6-nucleotide telomeric repeat unit, 5'-TTAGGG-3'. The catalytic cycle involves primer binding, primer extension and release of product once the template boundary has been reached or nascent product translocation followed by further extension. More active on substrates containing 2 or 3 telomeric repeats. Telomerase activity is regulated by a number of factors including telomerase complex-associated proteins, chaperones and polypeptide modifiers. Modulates Wnt signaling. Plays important roles in aging and antiapoptosis. This Canis lupus familiaris (Dog) protein is Telomerase reverse transcriptase (TERT).